We begin with the raw amino-acid sequence, 126 residues long: Glycine cleavage system H protein (126 aa).

Residues Thr22–Lys104 enclose the Lipoyl-binding domain. Lys63 is modified (N6-lipoyllysine).

This sequence belongs to the GcvH family. As to quaternary structure, the glycine cleavage system is composed of four proteins: P, T, L and H. (R)-lipoate serves as cofactor.

Its function is as follows. The glycine cleavage system catalyzes the degradation of glycine. The H protein shuttles the methylamine group of glycine from the P protein to the T protein. In Christiangramia forsetii (strain DSM 17595 / CGMCC 1.15422 / KT0803) (Gramella forsetii), this protein is Glycine cleavage system H protein.